An 871-amino-acid polypeptide reads, in one-letter code: Bifunctional cordycepin biosynthesis cluster protein 3 (871 aa).

It functions in the pathway secondary metabolite biosynthesis. Functionally, nucleoside/nucleotide kinase; part of the gene cluster that mediates the biosynthesis of cordycepin (COR) and pentostatin (PTN), two adenosine analogs with related bioactivity profiles as both mimic adenosine and can inhibit some of the processes that are adenosine dependent. Within the pathway, cns3 catalyzes both the first step of cordycepin biosynthesis by phosphorylating adenosine into 3'-AMP via its kinase activity and the conversion of adenosine into pentostatin via its ATP phosphoribosyltransferase activity. The first step of cordycepin biosynthesis involves hydroxyl phosphorylation of the 3'-OH position on adenosine to produce adenosine-3'-monophosphate (3'-AMP), catalyzed by kinase activity of cns3. Next, 3'-AMP is dephosphorylated to 2'-carbonyl-3'-deoxyadenosine (2'-C-3'-dA) by cns2, which is finally converted to cordycepin (3'-deoxyadenosine) by the oxidoreductase cns1. The polypeptide is Bifunctional cordycepin biosynthesis cluster protein 3 (Cordyceps militaris (strain CM01) (Caterpillar fungus)).